The sequence spans 218 residues: MDKSESASAGRNRRRRPRRGSRSASSSSDANFRVLSQQLSRLNKTLAAGRPTINHPTFVGSERCKPGYTFTSITLKPPKIDRGSYYGKRLLLPDSVAEFDKKLVSRIQIRVNPLPKFDSTVWVTVRKVPASSDLSVTAISAMFADGASPVLVYQYAASGIQANNKLLYDLSAMRADIGDMRKYAVLVYSKDDALETDELVLHVDIEHQRIPTSRVLPV.

The residue at position 1 (Met1) is an N-acetylmethionine; by host. The span at 1–10 shows a compositional bias: low complexity; that stretch reads MDKSESASAG. Residues 1–30 are disordered; it reads MDKSESASAGRNRRRRPRRGSRSASSSSDA. Basic residues predominate over residues 11–21; sequence RNRRRRPRRGS.

Belongs to the cucumovirus capsid protein family.

It is found in the virion. Its function is as follows. Capsid protein. Probably binds RNA and plays a role in packaging. The sequence is that of Capsid protein from Cucumis sativus (Cucumber).